The sequence spans 159 residues: RNA pyrophosphohydrolase (159 aa).

The 144-residue stretch at 6–149 (GFRPNVGIIL…KREVYRRALK (144 aa)) folds into the Nudix hydrolase domain. The Nudix box motif lies at 38 to 59 (GGINPQETPEDALYRELNEEVG).

It belongs to the Nudix hydrolase family. RppH subfamily. A divalent metal cation is required as a cofactor.

In terms of biological role, accelerates the degradation of transcripts by removing pyrophosphate from the 5'-end of triphosphorylated RNA, leading to a more labile monophosphorylated state that can stimulate subsequent ribonuclease cleavage. This is RNA pyrophosphohydrolase from Pseudomonas savastanoi pv. phaseolicola (strain 1448A / Race 6) (Pseudomonas syringae pv. phaseolicola (strain 1448A / Race 6)).